Here is a 334-residue protein sequence, read N- to C-terminus: Ornithine carbamoyltransferase, catabolic (334 aa).

Carbamoyl phosphate is bound by residues 57-60 (STRT), Q84, R108, and 135-138 (HPTQ). Residues N168, D232, and 236–237 (SM) contribute to the L-ornithine site. Residues 274 to 275 (CL) and R321 contribute to the carbamoyl phosphate site.

It belongs to the aspartate/ornithine carbamoyltransferase superfamily. OTCase family.

The protein localises to the cytoplasm. It catalyses the reaction carbamoyl phosphate + L-ornithine = L-citrulline + phosphate + H(+). Its pathway is amino-acid degradation; L-arginine degradation via ADI pathway; carbamoyl phosphate from L-arginine: step 2/2. Its function is as follows. Reversibly catalyzes the transfer of the carbamoyl group from carbamoyl phosphate (CP) to the N(epsilon) atom of ornithine (ORN) to produce L-citrulline. The polypeptide is Ornithine carbamoyltransferase, catabolic (arcB) (Avibacterium paragallinarum (Haemophilus gallinarum)).